The following is a 414-amino-acid chain: ORC1-type DNA replication protein 1 (414 aa).

Residues 70–74 (TGKTA), tyrosine 213, and arginine 225 contribute to the ATP site.

Belongs to the CDC6/cdc18 family.

Involved in regulation of DNA replication. This Methanosarcina mazei (strain ATCC BAA-159 / DSM 3647 / Goe1 / Go1 / JCM 11833 / OCM 88) (Methanosarcina frisia) protein is ORC1-type DNA replication protein 1 (cdc6-1).